A 180-amino-acid polypeptide reads, in one-letter code: NAD(P)H-quinone oxidoreductase subunit I, chloroplastic (180 aa).

4Fe-4S ferredoxin-type domains are found at residues 55–84 and 95–124; these read GRIH…VDWR and LNYS…MTEE. [4Fe-4S] cluster contacts are provided by cysteine 64, cysteine 67, cysteine 70, cysteine 74, cysteine 104, cysteine 107, cysteine 110, and cysteine 114.

It belongs to the complex I 23 kDa subunit family. NDH is composed of at least 16 different subunits, 5 of which are encoded in the nucleus. Requires [4Fe-4S] cluster as cofactor.

The protein localises to the plastid. It is found in the chloroplast thylakoid membrane. It catalyses the reaction a plastoquinone + NADH + (n+1) H(+)(in) = a plastoquinol + NAD(+) + n H(+)(out). The enzyme catalyses a plastoquinone + NADPH + (n+1) H(+)(in) = a plastoquinol + NADP(+) + n H(+)(out). In terms of biological role, NDH shuttles electrons from NAD(P)H:plastoquinone, via FMN and iron-sulfur (Fe-S) centers, to quinones in the photosynthetic chain and possibly in a chloroplast respiratory chain. The immediate electron acceptor for the enzyme in this species is believed to be plastoquinone. Couples the redox reaction to proton translocation, and thus conserves the redox energy in a proton gradient. This is NAD(P)H-quinone oxidoreductase subunit I, chloroplastic from Triticum aestivum (Wheat).